Consider the following 384-residue polypeptide: PqqA peptide cyclase (384 aa).

Residues 5 to 220 (VGLPLWLLAE…TNEYREKLKA (216 aa)) form the Radical SAM core domain. [4Fe-4S] cluster contacts are provided by Cys-19, Cys-23, and Cys-26.

It belongs to the radical SAM superfamily. PqqE family. In terms of assembly, interacts with PqqD. The interaction is necessary for activity of PqqE. It depends on [4Fe-4S] cluster as a cofactor.

It carries out the reaction [PQQ precursor protein] + S-adenosyl-L-methionine = E-Y cross-linked-[PQQ precursor protein] + 5'-deoxyadenosine + L-methionine + H(+). It participates in cofactor biosynthesis; pyrroloquinoline quinone biosynthesis. In terms of biological role, catalyzes the cross-linking of a glutamate residue and a tyrosine residue in the PqqA protein as part of the biosynthesis of pyrroloquinoline quinone (PQQ). This chain is PqqA peptide cyclase, found in Acinetobacter baumannii (strain ACICU).